A 319-amino-acid polypeptide reads, in one-letter code: Malate dehydrogenase (319 aa).

NAD(+) contacts are provided by residues 10 to 15 and D34; that span reads GAGNIG. Residues R83 and R89 each coordinate substrate. Residues N96 and 119 to 121 contribute to the NAD(+) site; that span reads ITN. N121 and R152 together coordinate substrate. Catalysis depends on H176, which acts as the Proton acceptor.

Belongs to the LDH/MDH superfamily. MDH type 3 family.

It catalyses the reaction (S)-malate + NAD(+) = oxaloacetate + NADH + H(+). In terms of biological role, catalyzes the reversible oxidation of malate to oxaloacetate. The polypeptide is Malate dehydrogenase (Francisella tularensis subsp. mediasiatica (strain FSC147)).